Here is a 386-residue protein sequence, read N- to C-terminus: Ribosomal RNA small subunit methyltransferase H (386 aa).

S-adenosyl-L-methionine is bound by residues 97-99 (GGH), Asp-116, Tyr-143, Asp-167, and Gln-174.

This sequence belongs to the methyltransferase superfamily. RsmH family.

It localises to the cytoplasm. It carries out the reaction cytidine(1402) in 16S rRNA + S-adenosyl-L-methionine = N(4)-methylcytidine(1402) in 16S rRNA + S-adenosyl-L-homocysteine + H(+). Functionally, specifically methylates the N4 position of cytidine in position 1402 (C1402) of 16S rRNA. The sequence is that of Ribosomal RNA small subunit methyltransferase H from Mycolicibacterium paratuberculosis (strain ATCC BAA-968 / K-10) (Mycobacterium paratuberculosis).